We begin with the raw amino-acid sequence, 261 residues long: Cytochrome c oxidase subunit 3 (261 aa).

Over 1-15 (MTHQTHAYHMVNPSP) the chain is Mitochondrial matrix. Residues 16–34 (WPLTGALSALLMTSGLAMW) traverse the membrane as a helical segment. At 35–40 (FHFNST) the chain is on the mitochondrial intermembrane side. A helical transmembrane segment spans residues 41 to 66 (ILLMIGLTTNTLTMYQWWRDVIREST). Residues 67–72 (FQGHHT) lie on the Mitochondrial matrix side of the membrane. The helical transmembrane segment at 73–105 (PTVQKGLRYGMILFIISEVLFFTGFFWAFYHSS) threads the bilayer. Topologically, residues 106–128 (LAPTPELGGCWPPTGIHPLNPLE) are mitochondrial intermembrane. A helical transmembrane segment spans residues 129–152 (VPLLNTSVLLASGVSITWAHHSLM). Residues 153-155 (EGN) lie on the Mitochondrial matrix side of the membrane. Residues 156–183 (RYPMLQALFITIALGVYFTLLQASEYYE) traverse the membrane as a helical segment. Residues 184–190 (APFTISD) are Mitochondrial intermembrane-facing. The chain crosses the membrane as a helical span at residues 191–223 (GIYGSTFFVATGFHGLHVIIGSTFLIVCFFRQL). The Mitochondrial matrix portion of the chain corresponds to 224–232 (KFHFTSNHH). The chain crosses the membrane as a helical span at residues 233–256 (FGFEAAAWYWHFVDVVWLFLYVSI). The Mitochondrial intermembrane segment spans residues 257-261 (YWWGS).

Belongs to the cytochrome c oxidase subunit 3 family. As to quaternary structure, component of the cytochrome c oxidase (complex IV, CIV), a multisubunit enzyme composed of 14 subunits. The complex is composed of a catalytic core of 3 subunits MT-CO1, MT-CO2 and MT-CO3, encoded in the mitochondrial DNA, and 11 supernumerary subunits COX4I, COX5A, COX5B, COX6A, COX6B, COX6C, COX7A, COX7B, COX7C, COX8 and NDUFA4, which are encoded in the nuclear genome. The complex exists as a monomer or a dimer and forms supercomplexes (SCs) in the inner mitochondrial membrane with NADH-ubiquinone oxidoreductase (complex I, CI) and ubiquinol-cytochrome c oxidoreductase (cytochrome b-c1 complex, complex III, CIII), resulting in different assemblies (supercomplex SCI(1)III(2)IV(1) and megacomplex MCI(2)III(2)IV(2)).

The protein localises to the mitochondrion inner membrane. It carries out the reaction 4 Fe(II)-[cytochrome c] + O2 + 8 H(+)(in) = 4 Fe(III)-[cytochrome c] + 2 H2O + 4 H(+)(out). Functionally, component of the cytochrome c oxidase, the last enzyme in the mitochondrial electron transport chain which drives oxidative phosphorylation. The respiratory chain contains 3 multisubunit complexes succinate dehydrogenase (complex II, CII), ubiquinol-cytochrome c oxidoreductase (cytochrome b-c1 complex, complex III, CIII) and cytochrome c oxidase (complex IV, CIV), that cooperate to transfer electrons derived from NADH and succinate to molecular oxygen, creating an electrochemical gradient over the inner membrane that drives transmembrane transport and the ATP synthase. Cytochrome c oxidase is the component of the respiratory chain that catalyzes the reduction of oxygen to water. Electrons originating from reduced cytochrome c in the intermembrane space (IMS) are transferred via the dinuclear copper A center (CU(A)) of subunit 2 and heme A of subunit 1 to the active site in subunit 1, a binuclear center (BNC) formed by heme A3 and copper B (CU(B)). The BNC reduces molecular oxygen to 2 water molecules using 4 electrons from cytochrome c in the IMS and 4 protons from the mitochondrial matrix. This is Cytochrome c oxidase subunit 3 (MT-CO3) from Raphicerus melanotis (Cape grysbok).